A 296-amino-acid chain; its full sequence is Probable DNA-directed RNA polymerase III subunit RPC6 (296 aa).

This sequence belongs to the eukaryotic RPC34/RPC39 RNA polymerase subunit family.

The protein localises to the nucleus. In terms of biological role, DNA-dependent RNA polymerase catalyzes the transcription of DNA into RNA using the four ribonucleoside triphosphates as substrates. Specific peripheric component of RNA polymerase III which synthesizes small RNAs, such as 5S rRNA and tRNAs. The polypeptide is Probable DNA-directed RNA polymerase III subunit RPC6 (Caenorhabditis elegans).